A 186-amino-acid chain; its full sequence is CoB--CoM heterodisulfide reductase iron-sulfur subunit C 2 (186 aa).

4Fe-4S ferredoxin-type domains are found at residues 26–56 and 67–99; these read GEDIVKSIKACYQCGTCTGSCPSGRRTAYRT and LDDVLDSDDIWYCTTCYTCYERCPRDVKITEII. Residues Cys36, Cys39, Cys42, Cys46, Cys79, Cys82, Cys85, and Cys89 each coordinate [4Fe-4S] cluster.

Belongs to the HdrC family. As to quaternary structure, the heterodisulfide reductase is composed of three subunits; HdrA, HdrB and HdrC. The cofactor is [4Fe-4S] cluster.

It functions in the pathway cofactor metabolism; coenzyme M-coenzyme B heterodisulfide reduction; coenzyme B and coenzyme M from coenzyme M-coenzyme B heterodisulfide: step 1/1. Functionally, part of a complex that catalyzes the reversible reduction of CoM-S-S-CoB to the thiol-coenzymes H-S-CoM (coenzyme M) and H-S-CoB (coenzyme B). This is CoB--CoM heterodisulfide reductase iron-sulfur subunit C 2 (hdrC2) from Methanocaldococcus jannaschii (strain ATCC 43067 / DSM 2661 / JAL-1 / JCM 10045 / NBRC 100440) (Methanococcus jannaschii).